Reading from the N-terminus, the 1358-residue chain is Phosphoinositide 3-kinase regulatory subunit 4 (1358 aa).

Residue Gly-2 is the site of N-myristoyl glycine attachment. Positions 26-324 (FEYDKSLGST…AFPEIFYTFL (299 aa)) constitute a Protein kinase domain. Residues 32-40 (LGSTRFFKV) and Lys-53 each bind ATP. The active-site Proton acceptor is Asp-148. HEAT repeat units follow at residues 413 to 450 (ILLD…LVKE), 458 to 495 (IYPE…TALR), and 572 to 610 (KAND…YVGW). Phosphoserine occurs at positions 808, 813, 853, and 865. Positions 875-898 (LPKGSDQEVIQTGKPPRSESSAGI) are disordered. WD repeat units follow at residues 991–1030 (EHKS…GKTT), 1040–1079 (RIGG…LPKS), 1093–1134 (KEDG…NAWT), 1139–1178 (LKSG…PISS), 1182–1223 (PSRA…RRFT), and 1237–1278 (PSPH…RSYV). The segment at 1307 to 1326 (KQKVGPSDDTPRRGPESLPV) is disordered. Residues 1315–1326 (DTPRRGPESLPV) show a composition bias toward basic and acidic residues. Phosphothreonine is present on Thr-1316. Residues 1327 to 1358 (GHHDIITDVATFQTTQGFIVTASRDGIVKVWK) form a WD 7 repeat.

This sequence belongs to the protein kinase superfamily. Ser/Thr protein kinase family. As to quaternary structure, component of the PI3K (PI3KC3/PI3K-III/class III phosphatidylinositol 3-kinase) complex the core of which is composed of the catalytic subunit PIK3C3, the regulatory subunit PIK3R4 and BECN1 associating with additional regulatory/auxiliary subunits to form alternative complex forms. Alternative complex forms containing a fourth regulatory subunit in a mutually exclusive manner are PI3K complex I (PI3KC3-C1) containing ATG14, and PI3K complex II (PI3KC3-C2) containing UVRAG. PI3KC3-C1 displays a V-shaped architecture with PIK3R4 serving as a bridge between PIK3C3 and the ATG14:BECN1 subcomplex. Both, PI3KC3-C1 and PI3KC3-C2, can associate with further regulatory subunits, such as RUBCN, SH3GLB1/Bif-1, AMBRA1 and NRBF2. PI3KC3-C1 probably associates with PIK3CB. Interacts with RAB7A in the presence of PIK3C3/VPS34. Interacts with NRBF2. Interacts with ARMC3. Mn(2+) is required as a cofactor. Post-translationally, myristoylated. Probably autophosphorylated. In terms of tissue distribution, ubiquitously expressed.

It localises to the late endosome. The protein resides in the cytoplasmic vesicle. The protein localises to the autophagosome. Its subcellular location is the membrane. The enzyme catalyses L-seryl-[protein] + ATP = O-phospho-L-seryl-[protein] + ADP + H(+). The catalysed reaction is L-threonyl-[protein] + ATP = O-phospho-L-threonyl-[protein] + ADP + H(+). Functionally, regulatory subunit of the PI3K complex that mediates formation of phosphatidylinositol 3-phosphate; different complex forms are believed to play a role in multiple membrane trafficking pathways: PI3KC3-C1 is involved in initiation of autophagosomes and PI3KC3-C2 in maturation of autophagosomes and endocytosis. Involved in regulation of degradative endocytic trafficking and cytokinesis, probably in the context of PI3KC3-C2. The chain is Phosphoinositide 3-kinase regulatory subunit 4 (PIK3R4) from Homo sapiens (Human).